The chain runs to 523 residues: Ubiquitin carboxyl-terminal hydrolase 22-A (523 aa).

The UBP-type zinc finger occupies 4-121; sequence AGCSHVNSFK…KEEQRKAWKL (118 aa). Residues C6, H8, C46, C49, C59, C62, C67, H72, H76, H82, C95, and C98 each coordinate Zn(2+). The region spanning 174–518 is the USP domain; the sequence is RGLINLGNTC…EGYLLFYHKQ (345 aa). C183 acts as the Nucleophile in catalysis. The Proton acceptor role is filled by H477.

Belongs to the peptidase C19 family. UBP8 subfamily. As to quaternary structure, component of some SAGA transcription coactivator-HAT complexes.

It is found in the nucleus. It carries out the reaction Thiol-dependent hydrolysis of ester, thioester, amide, peptide and isopeptide bonds formed by the C-terminal Gly of ubiquitin (a 76-residue protein attached to proteins as an intracellular targeting signal).. Histone deubiquitinating component of the transcription regulatory histone acetylation (HAT) complex SAGA. Catalyzes the deubiquitination of both histones H2A and H2B, thereby acting as a coactivator. Recruited to specific gene promoters by activators, where it is required for transcription. The chain is Ubiquitin carboxyl-terminal hydrolase 22-A (usp22-a) from Xenopus laevis (African clawed frog).